Reading from the N-terminus, the 83-residue chain is NAD(P)H-quinone oxidoreductase subunit L (83 aa).

The next 2 membrane-spanning stretches (helical) occupy residues 15–35 (LLVL…VPLA) and 53–73 (LGIY…APFL).

Belongs to the complex I NdhL subunit family. As to quaternary structure, NDH-1 can be composed of about 15 different subunits; different subcomplexes with different compositions have been identified which probably have different functions.

Its subcellular location is the cellular thylakoid membrane. It catalyses the reaction a plastoquinone + NADH + (n+1) H(+)(in) = a plastoquinol + NAD(+) + n H(+)(out). The catalysed reaction is a plastoquinone + NADPH + (n+1) H(+)(in) = a plastoquinol + NADP(+) + n H(+)(out). Functionally, NDH-1 shuttles electrons from an unknown electron donor, via FMN and iron-sulfur (Fe-S) centers, to quinones in the respiratory and/or the photosynthetic chain. The immediate electron acceptor for the enzyme in this species is believed to be plastoquinone. Couples the redox reaction to proton translocation, and thus conserves the redox energy in a proton gradient. Cyanobacterial NDH-1 also plays a role in inorganic carbon-concentration. This chain is NAD(P)H-quinone oxidoreductase subunit L, found in Synechococcus sp. (strain CC9605).